The primary structure comprises 58 residues: Large ribosomal subunit protein bL32 (58 aa).

The segment covering Met-1–Gln-15 has biased composition (basic residues). The disordered stretch occupies residues Met-1–Lys-23.

This sequence belongs to the bacterial ribosomal protein bL32 family.

The chain is Large ribosomal subunit protein bL32 from Parasynechococcus marenigrum (strain WH8102).